Reading from the N-terminus, the 504-residue chain is Fumitremorgin C monooxygenase (504 aa).

The chain crosses the membrane as a helical span at residues 9 to 29 (LPYPGVVGASLLVILGIILLF). Residue Cys442 coordinates heme.

This sequence belongs to the cytochrome P450 family. Requires heme as cofactor.

It localises to the membrane. It carries out the reaction fumitremorgin C + 2 reduced [NADPH--hemoprotein reductase] + 2 O2 = 12alpha,13alpha-dihydroxyfumitremorgin C + 2 oxidized [NADPH--hemoprotein reductase] + 2 H2O + 2 H(+). The protein operates within mycotoxin biosynthesis. Cytochrome P450 monooxygenase; part of the gene cluster that mediates the biosynthesis of fumitremorgins, indole alkaloids that carry not only intriguing chemical structures, but also interesting biological and pharmacological activities. The biosynthesis of fumitremorgin-type alkaloids begins by condensation of the two amino acids L-tryptophan and L-proline to brevianamide F, catalyzed by the non-ribosomal peptide synthetase ftmPS/ftmA. Brevianamide F is then prenylated by the prenyltransferase ftmPT1/ftmB in the presence of dimethylallyl diphosphate, resulting in the formation of tryprostatin B. The three cytochrome P450 monooxygenases, ftmP450-1/ftmC, ftmP450-2/ftmE and ftmP450-3/FtmG, are responsible for the conversion of tryprostatin B to 6-hydroxytryprostatin B, tryprostatin A to fumitremorgin C and fumitremorgin C to 12,13-dihydroxyfumitremorgin C, respectively. The putative methyltransferase ftmMT/ftmD is expected for the conversion of 6-hydroxytryprostatin B to tryprostatin A. FtmPT2/FtmH catalyzes the prenylation of 12,13-dihydroxyfumitre-morgin C in the presence of dimethylallyl diphosphate, resulting in the formation of fumitremorgin B. Fumitremorgin B is further converted to verruculogen by ftmOx1/ftmF via the insertion of an endoperoxide bond between the two prenyl moieties. Finally, verruculogen is further converted to fumitremorgin A by the verruculogen prenyltransferase ftmPT3. This is Fumitremorgin C monooxygenase from Neosartorya fischeri (strain ATCC 1020 / DSM 3700 / CBS 544.65 / FGSC A1164 / JCM 1740 / NRRL 181 / WB 181) (Aspergillus fischerianus).